We begin with the raw amino-acid sequence, 385 residues long: Chaperone protein DnaJ (385 aa).

Residues 5–70 (DYYEVLGVSK…DKKAAYDRFG (66 aa)) form the J domain. Residues 143–221 (GLSKQITVPS…CGGAGRQEKD (79 aa)) form a CR-type zinc finger. Positions 156, 159, 173, 176, 195, 198, 209, and 212 each coordinate Zn(2+). 4 CXXCXGXG motif repeats span residues 156 to 163 (CSSCDGTG), 173 to 180 (CPTCSGMG), 195 to 202 (CPTCNGMG), and 209 to 216 (CRTCGGAG). The tract at residues 299-323 (GGRSRVRVPEGSQSGRQMRLRGKGM) is disordered.

The protein belongs to the DnaJ family. In terms of assembly, homodimer. The cofactor is Zn(2+).

It is found in the cytoplasm. In terms of biological role, participates actively in the response to hyperosmotic and heat shock by preventing the aggregation of stress-denatured proteins and by disaggregating proteins, also in an autonomous, DnaK-independent fashion. Unfolded proteins bind initially to DnaJ; upon interaction with the DnaJ-bound protein, DnaK hydrolyzes its bound ATP, resulting in the formation of a stable complex. GrpE releases ADP from DnaK; ATP binding to DnaK triggers the release of the substrate protein, thus completing the reaction cycle. Several rounds of ATP-dependent interactions between DnaJ, DnaK and GrpE are required for fully efficient folding. Also involved, together with DnaK and GrpE, in the DNA replication of plasmids through activation of initiation proteins. This chain is Chaperone protein DnaJ, found in Jannaschia sp. (strain CCS1).